Consider the following 384-residue polypeptide: Probable tRNA-splicing endonuclease subunit sen54 (384 aa).

A disordered region spans residues 37–57 (GTYTIPKRGQKDFEPDGTNKQ). A compositionally biased stretch (basic and acidic residues) spans 45-55 (GQKDFEPDGTN).

It belongs to the SEN54 family. In terms of assembly, tRNA splicing endonuclease is a heterotetramer composed of sen2, sen15, sen34 and sen54. Interacts directly with sen2.

Its function is as follows. Non-catalytic subunit of the tRNA-splicing endonuclease complex, a complex responsible for identification and cleavage of the splice sites in pre-tRNA. It cleaves pre-tRNA at the 5' and 3' splice sites to release the intron. The products are an intron and two tRNA half-molecules bearing 2',3' cyclic phosphate and 5'-OH termini. There are no conserved sequences at the splice sites, but the intron is invariably located at the same site in the gene, placing the splice sites an invariant distance from the constant structural features of the tRNA body. May be required to embody the molecular ruler of the complex. In Schizosaccharomyces pombe (strain 972 / ATCC 24843) (Fission yeast), this protein is Probable tRNA-splicing endonuclease subunit sen54 (sen54).